A 252-amino-acid polypeptide reads, in one-letter code: 5-oxoprolinase subunit A (252 aa).

Belongs to the LamB/PxpA family. Forms a complex composed of PxpA, PxpB and PxpC.

It catalyses the reaction 5-oxo-L-proline + ATP + 2 H2O = L-glutamate + ADP + phosphate + H(+). Its function is as follows. Catalyzes the cleavage of 5-oxoproline to form L-glutamate coupled to the hydrolysis of ATP to ADP and inorganic phosphate. In Mycolicibacterium paratuberculosis (strain ATCC BAA-968 / K-10) (Mycobacterium paratuberculosis), this protein is 5-oxoprolinase subunit A.